Reading from the N-terminus, the 285-residue chain is Protease HtpX homolog (285 aa).

2 consecutive transmembrane segments (helical) span residues 7–27 (TAML…MIGG) and 30–50 (GMTI…WFSD). Histidine 131 provides a ligand contact to Zn(2+). The active site involves glutamate 132. Residue histidine 135 participates in Zn(2+) binding. 2 helical membrane passes run 141-161 (ILIS…ANFA) and 177-197 (IAGI…QMAI). A Zn(2+)-binding site is contributed by glutamate 202.

The protein belongs to the peptidase M48B family. The cofactor is Zn(2+).

It localises to the cell inner membrane. The polypeptide is Protease HtpX homolog (Paraburkholderia phytofirmans (strain DSM 17436 / LMG 22146 / PsJN) (Burkholderia phytofirmans)).